The sequence spans 488 residues: Mannitol 2-dehydrogenase (488 aa).

Residue 37–48 coordinates NAD(+); it reads IVHVGVGGFHRA.

This sequence belongs to the mannitol dehydrogenase family. As to quaternary structure, monomer.

It catalyses the reaction D-mannitol + NAD(+) = D-fructose + NADH + H(+). Catalyzes the NAD(H)-dependent interconversion of D-fructose and D-mannitol in the mannitol metabolic pathway. In Aspergillus niger (strain ATCC MYA-4892 / CBS 513.88 / FGSC A1513), this protein is Mannitol 2-dehydrogenase.